Here is a 213-residue protein sequence, read N- to C-terminus: Probable elongation factor 1-beta/1-delta 1 (213 aa).

This sequence belongs to the EF-1-beta/EF-1-delta family. In terms of assembly, EF-1 is composed of 4 subunits: alpha, beta, delta, and gamma.

In terms of biological role, EF-1-beta and EF-1-delta stimulate the exchange of GDP bound to EF-1-alpha to GTP. This Caenorhabditis elegans protein is Probable elongation factor 1-beta/1-delta 1 (eef-1B.1).